Consider the following 629-residue polypeptide: tRNA uridine 5-carboxymethylaminomethyl modification enzyme MnmG (629 aa).

Residues 18 to 23 (GGGHAG), Val-130, and Ser-188 contribute to the FAD site. An NAD(+)-binding site is contributed by 280–294 (GPRYCPSIEDKVVRF). An FAD-binding site is contributed by Gln-377.

Belongs to the MnmG family. As to quaternary structure, homodimer. Heterotetramer of two MnmE and two MnmG subunits. FAD serves as cofactor.

The protein resides in the cytoplasm. Functionally, NAD-binding protein involved in the addition of a carboxymethylaminomethyl (cmnm) group at the wobble position (U34) of certain tRNAs, forming tRNA-cmnm(5)s(2)U34. The chain is tRNA uridine 5-carboxymethylaminomethyl modification enzyme MnmG from Granulibacter bethesdensis (strain ATCC BAA-1260 / CGDNIH1).